The following is a 400-amino-acid chain: Probable peptidoglycan D,D-transpeptidase PenA (400 aa).

Residues 1–21 are disordered; it reads NIDGKGQEGLELSREDSLRGE. Residue S128 is the Acyl-ester intermediate of the active site.

It belongs to the transpeptidase family. FtsI subfamily.

Its subcellular location is the cell inner membrane. The catalysed reaction is Preferential cleavage: (Ac)2-L-Lys-D-Ala-|-D-Ala. Also transpeptidation of peptidyl-alanyl moieties that are N-acyl substituents of D-alanine.. Its pathway is cell wall biogenesis; peptidoglycan biosynthesis. Functionally, catalyzes cross-linking of the peptidoglycan cell wall at the division septum. The polypeptide is Probable peptidoglycan D,D-transpeptidase PenA (Neisseria flavescens).